We begin with the raw amino-acid sequence, 293 residues long: 3-hydroxybutyryl-CoA dehydrogenase (293 aa).

The protein belongs to the 3-hydroxyacyl-CoA dehydrogenase family.

It catalyses the reaction (3S)-3-hydroxybutanoyl-CoA + NADP(+) = acetoacetyl-CoA + NADPH + H(+). Its pathway is lipid metabolism; butanoate metabolism. This chain is 3-hydroxybutyryl-CoA dehydrogenase (hbdA), found in Bradyrhizobium diazoefficiens (strain JCM 10833 / BCRC 13528 / IAM 13628 / NBRC 14792 / USDA 110).